Reading from the N-terminus, the 49-residue chain is Thymopoietin-1 (49 aa).

An LEM-like domain is found at 4 to 47 (LEDPSVLTKEKLKSELVANNVTLPAGEQRKDVYVELYLQHLTAL). The biological activity stretch occupies residues 32–36 (RKDVY).

This sequence belongs to the thymopoietin family.

Its function is as follows. Hormone of the thymus with pleiotropic actions on prothymocytes, mature T-cells, the nicotinic acetylcholine receptor, and pituitary corticotrophs. This chain is Thymopoietin-1, found in Bos taurus (Bovine).